The following is a 317-amino-acid chain: Probable cell division protein WhiA (317 aa).

The H-T-H motif DNA-binding region spans 281–314 (TLKELGEMINPPIGKSGVNHRLRKLDQIADRERG).

Belongs to the WhiA family.

Its function is as follows. Involved in cell division and chromosome segregation. The chain is Probable cell division protein WhiA from Alkaliphilus metalliredigens (strain QYMF).